Here is a 152-residue protein sequence, read N- to C-terminus: Coiled-coil domain-containing protein 182 (152 aa).

The stretch at 46 to 109 (ADLEILQQKV…RLREEEDRGI (64 aa)) forms a coiled coil.

This chain is Coiled-coil domain-containing protein 182 (Ccdc182), found in Mus musculus (Mouse).